Consider the following 102-residue polypeptide: Small ribosomal subunit protein eS24 (102 aa).

This sequence belongs to the eukaryotic ribosomal protein eS24 family.

The polypeptide is Small ribosomal subunit protein eS24 (rps24e) (Haloarcula marismortui (strain ATCC 43049 / DSM 3752 / JCM 8966 / VKM B-1809) (Halobacterium marismortui)).